The chain runs to 557 residues: (-)-germacrene D synthase (557 aa).

3 residues coordinate Mg(2+): Asp310, Asp314, and Glu462. A DDXXD motif motif is present at residues 310–314 (DDIYD).

It belongs to the terpene synthase family. Tpsa subfamily. The cofactor is Mg(2+). Expressed in flowers. Detected in stems, young leaves and tendrils.

The protein localises to the cytoplasm. The catalysed reaction is (2E,6E)-farnesyl diphosphate + H2O = (1E,4S,5E,7R)-germacra-1(10),5-dien-11-ol + diphosphate. It carries out the reaction (2E,6E)-farnesyl diphosphate = (-)-germacrene D + diphosphate. The protein operates within secondary metabolite biosynthesis; terpenoid biosynthesis. Its function is as follows. Involved in the biosynthesis of germacrene D. Can use farnesyl diphosphate as substrate, but not geranyl diphosphate or geranylgeranyl diphosphate. Produces mainly (-)-germacrene D along with gamma-cadinene. This chain is (-)-germacrene D synthase, found in Vitis vinifera (Grape).